Reading from the N-terminus, the 178-residue chain is ATP synthase subunit delta (178 aa).

Belongs to the ATPase delta chain family. In terms of assembly, F-type ATPases have 2 components, F(1) - the catalytic core - and F(0) - the membrane proton channel. F(1) has five subunits: alpha(3), beta(3), gamma(1), delta(1), epsilon(1). F(0) has three main subunits: a(1), b(2) and c(10-14). The alpha and beta chains form an alternating ring which encloses part of the gamma chain. F(1) is attached to F(0) by a central stalk formed by the gamma and epsilon chains, while a peripheral stalk is formed by the delta and b chains.

Its subcellular location is the cell inner membrane. Its function is as follows. F(1)F(0) ATP synthase produces ATP from ADP in the presence of a proton or sodium gradient. F-type ATPases consist of two structural domains, F(1) containing the extramembraneous catalytic core and F(0) containing the membrane proton channel, linked together by a central stalk and a peripheral stalk. During catalysis, ATP synthesis in the catalytic domain of F(1) is coupled via a rotary mechanism of the central stalk subunits to proton translocation. Functionally, this protein is part of the stalk that links CF(0) to CF(1). It either transmits conformational changes from CF(0) to CF(1) or is implicated in proton conduction. This chain is ATP synthase subunit delta, found in Pseudomonas syringae pv. tomato (strain ATCC BAA-871 / DC3000).